Consider the following 305-residue polypeptide: Glycine--tRNA ligase alpha subunit (305 aa).

It belongs to the class-II aminoacyl-tRNA synthetase family. In terms of assembly, tetramer of two alpha and two beta subunits.

It localises to the cytoplasm. It catalyses the reaction tRNA(Gly) + glycine + ATP = glycyl-tRNA(Gly) + AMP + diphosphate. The protein is Glycine--tRNA ligase alpha subunit of Vibrio parahaemolyticus serotype O3:K6 (strain RIMD 2210633).